We begin with the raw amino-acid sequence, 753 residues long: Nuclear hormone receptor family member daf-12 (753 aa).

A disordered region spans residues 1 to 109 (MGTNGGVIAE…PDDGLLDSSE (109 aa)). The segment covering 20 to 29 (NPDKVEEPVV) has biased composition (basic and acidic residues). Over residues 30–44 (RRKRVTRRRHRRIHS) the composition is skewed to basic residues. Positions 115 to 190 (QKTCRVCGDH…VGMKKEWILN (76 aa)) form a DNA-binding region, nuclear receptor. NR C4-type zinc fingers lie at residues 118 to 138 (CRVC…CESC) and 154 to 173 (CPYS…CQKC). The short motif at 191-206 (EEQLRRRKNSRLNNTG) is the Nuclear localization signal element. Disordered regions lie at residues 198–251 (KNSR…TINP), 266–314 (NAMP…GYDP), and 376–410 (GHPM…EKNH). The segment covering 201 to 211 (RLNNTGTCNKR) has biased composition (polar residues). The segment covering 212–227 (SQPGNQQSPQGPNQQP) has biased composition (low complexity). 2 stretches are compositionally biased toward polar residues: residues 285–301 (PVGS…SLTM) and 394–410 (MSLS…EKNH). The NR LBD domain occupies 516 to 753 (AELKALDAVR…ELPGEFFKIK (238 aa)).

The protein belongs to the nuclear hormone receptor family. In terms of assembly, interacts with din-1 isoform d. Expressed throughout muscles of the pharynx. Expressed in epidermal seam cells, the vulva, head neurons, mature spermatheca, uterus and intestine.

The protein localises to the nucleus. Functionally, nuclear receptor which binds directly to response elements in target gene promoters. Activity is modulated by binding of steroid hormone ligands that include dafachronic acids. Regulates expression of genes involved in postembryonic development and the dauer diapause, in response to environmental cues. Inhibits the expression of let-7 family members when bound to corepressor din-1s which is an isoform of din-1. Plays a role in controlling the timing of seam cell development during the larval stages. Has a role in the immune response to bacterial infection, via regulation of let-7 miRNAs. Controls expression of genes that promote the aerobic catabolism of fatty acids for reproductive growth. May be involved in thermotolerance. The chain is Nuclear hormone receptor family member daf-12 from Caenorhabditis elegans.